The primary structure comprises 31 residues: Cytochrome b6-f complex subunit 6 (31 aa).

The chain crosses the membrane as a helical span at residues 4 to 26 (ITSYFGFLLAASTITPALLIGLS).

It belongs to the PetL family. In terms of assembly, the 4 large subunits of the cytochrome b6-f complex are cytochrome b6, subunit IV (17 kDa polypeptide, PetD), cytochrome f and the Rieske protein, while the 4 small subunits are PetG, PetL, PetM and PetN. The complex functions as a dimer.

It localises to the plastid. The protein resides in the chloroplast thylakoid membrane. Component of the cytochrome b6-f complex, which mediates electron transfer between photosystem II (PSII) and photosystem I (PSI), cyclic electron flow around PSI, and state transitions. PetL is important for photoautotrophic growth as well as for electron transfer efficiency and stability of the cytochrome b6-f complex. This is Cytochrome b6-f complex subunit 6 from Illicium oligandrum (Star anise).